A 180-amino-acid chain; its full sequence is uncharacterized protein (180 aa).

This is an uncharacterized protein from Rickettsia prowazekii (strain Madrid E).